A 132-amino-acid chain; its full sequence is Major pollen allergen Art v 1 (132 aa).

The first 24 residues, 1-24, serve as a signal peptide directing secretion; the sequence is MAKCSYVFCAVLLIFIVAIGEMEA. A defensin-like domain region spans residues 28-77; that stretch reads KLCEKTSKTYSGKCDNKKCDKKCIEWEKAQHGACHKREAGKESCFCYFDC. 4 cysteine pairs are disulfide-bonded: C30/C77, C41/C61, C46/C71, and C50/C73. Epitope recognized by IgE antibodies of mugwort pollen-sensitized patients regions lie at residues 64–70 and 79–87; these read REAGKES and KSPPGATPA. The interval 81–132 is disordered; it reads PPGATPAPPGAAPPPAAGGSPSPPADGGSPPPPADGGSPPVDGGSPPPPSTH. Over residues 83 to 114 the composition is skewed to pro residues; it reads GATPAPPGAAPPPAAGGSPSPPADGGSPPPPA. Residues 115-124 are compositionally biased toward low complexity; it reads DGGSPPVDGG.

In the N-terminal section; belongs to the DEFL family. The mature protein extracted from the plant exhibits an average rate of 76% of hydroxyprolines. Post-translationally, O-glycosylated. O-linkage of 3 galactoses plus 9-16 or 21-23 arabinose residues attached on one or two hydroxyprolines.

It localises to the secreted. This Artemisia vulgaris (Mugwort) protein is Major pollen allergen Art v 1.